Reading from the N-terminus, the 320-residue chain is ATP-dependent 6-phosphofructokinase (320 aa).

An ATP-binding site is contributed by Gly11. 21–25 lines the ADP pocket; sequence RAVVR. ATP is bound by residues 72-73 and 102-105; these read RC and GDGS. Asp103 contacts Mg(2+). Residue 125 to 127 coordinates substrate; sequence TID. The Proton acceptor role is filled by Asp127. An ADP-binding site is contributed by Arg154. Substrate-binding positions include Arg162 and 169–171; that span reads MGR. ADP contacts are provided by residues 185–187 and 214–216; these read GAE and KTH. Substrate is bound by residues Glu223, Arg244, and 250–253; that span reads HIQR.

This sequence belongs to the phosphofructokinase type A (PFKA) family. ATP-dependent PFK group I subfamily. Prokaryotic clade 'B1' sub-subfamily. As to quaternary structure, homotetramer. Mg(2+) serves as cofactor.

Its subcellular location is the cytoplasm. It catalyses the reaction beta-D-fructose 6-phosphate + ATP = beta-D-fructose 1,6-bisphosphate + ADP + H(+). It functions in the pathway carbohydrate degradation; glycolysis; D-glyceraldehyde 3-phosphate and glycerone phosphate from D-glucose: step 3/4. With respect to regulation, allosterically activated by ADP and other diphosphonucleosides, and allosterically inhibited by phosphoenolpyruvate. Catalyzes the phosphorylation of D-fructose 6-phosphate to fructose 1,6-bisphosphate by ATP, the first committing step of glycolysis. In Clostridium botulinum (strain Eklund 17B / Type B), this protein is ATP-dependent 6-phosphofructokinase.